Reading from the N-terminus, the 284-residue chain is 4-hydroxybenzoate octaprenyltransferase (284 aa).

9 helical membrane-spanning segments follow: residues 19–39 (IGSL…AQGL), 42–62 (LRVL…GCVI), 93–113 (LLLF…MNTL), 114–134 (TIQL…MKRF), 136–156 (HLPQ…AWAA), 158–178 (ANTL…WTIA), 210–230 (IIGL…QGLA), 233–253 (TSYY…QHLI), and 264–284 (AFLN…LSVW).

Belongs to the UbiA prenyltransferase family. Mg(2+) is required as a cofactor.

The protein resides in the cell inner membrane. The enzyme catalyses all-trans-octaprenyl diphosphate + 4-hydroxybenzoate = 4-hydroxy-3-(all-trans-octaprenyl)benzoate + diphosphate. It functions in the pathway cofactor biosynthesis; ubiquinone biosynthesis. In terms of biological role, catalyzes the prenylation of para-hydroxybenzoate (PHB) with an all-trans polyprenyl group. Mediates the second step in the final reaction sequence of ubiquinone-8 (UQ-8) biosynthesis, which is the condensation of the polyisoprenoid side chain with PHB, generating the first membrane-bound Q intermediate 3-octaprenyl-4-hydroxybenzoate. This Vibrio cholerae serotype O1 (strain ATCC 39541 / Classical Ogawa 395 / O395) protein is 4-hydroxybenzoate octaprenyltransferase.